A 441-amino-acid chain; its full sequence is MFLPQEIIRKKRDNLTLSQQEIQQFVAGITDNSVADSQIAALAMAIYFNGMELEENVHLALAMRDSGRRMHWKDLNLPGPIVDKHSTGGVGDVVSLMLGPMVAACGGFVPMISGRGLGHTGGTLDKLSAVPGYNPFPEPELFRKVVKDVGVAIIGQTSDLAPADRRFYATRDVTATVESIALITASILSKKLAAGLDVLVMDVKAGSGAFMPTMQKSIELAERIVKVGNGAGVATTALITEMSQPLASTAGNSIETREAVRYLKGDQRNPRLHEVTMALCAQMLIGGKLAADEADARAKLQAALDSGRAAEIFGRMVTALGGPADFMEHYDRHLAPAPIMRPVYADRAGYVGAMDTRGIGMAVCALGGGRRLATDVLDFRVGLSQFVELGQNIGKDTPLMMIHAADEASFEDAARRVKAAIRIDEAAPSELPLVYQIIRGE.

It belongs to the thymidine/pyrimidine-nucleoside phosphorylase family. In terms of assembly, homodimer.

The enzyme catalyses thymidine + phosphate = 2-deoxy-alpha-D-ribose 1-phosphate + thymine. Its pathway is pyrimidine metabolism; dTMP biosynthesis via salvage pathway; dTMP from thymine: step 1/2. In terms of biological role, the enzymes which catalyze the reversible phosphorolysis of pyrimidine nucleosides are involved in the degradation of these compounds and in their utilization as carbon and energy sources, or in the rescue of pyrimidine bases for nucleotide synthesis. The sequence is that of Thymidine phosphorylase from Chromobacterium violaceum (strain ATCC 12472 / DSM 30191 / JCM 1249 / CCUG 213 / NBRC 12614 / NCIMB 9131 / NCTC 9757 / MK).